The following is a 185-amino-acid chain: Peptidyl-tRNA hydrolase (185 aa).

Tyr14 contacts tRNA. The active-site Proton acceptor is His19. TRNA-binding residues include Tyr65, Asn67, and Asn113.

The protein belongs to the PTH family. Monomer.

The protein resides in the cytoplasm. It carries out the reaction an N-acyl-L-alpha-aminoacyl-tRNA + H2O = an N-acyl-L-amino acid + a tRNA + H(+). Functionally, hydrolyzes ribosome-free peptidyl-tRNAs (with 1 or more amino acids incorporated), which drop off the ribosome during protein synthesis, or as a result of ribosome stalling. Its function is as follows. Catalyzes the release of premature peptidyl moieties from peptidyl-tRNA molecules trapped in stalled 50S ribosomal subunits, and thus maintains levels of free tRNAs and 50S ribosomes. In Rickettsia canadensis (strain McKiel), this protein is Peptidyl-tRNA hydrolase.